We begin with the raw amino-acid sequence, 139 residues long: Small ribosomal subunit protein uS19 (139 aa).

Belongs to the universal ribosomal protein uS19 family.

In terms of biological role, protein S19 forms a complex with S13 that binds strongly to the 16S ribosomal RNA. In Ignicoccus hospitalis (strain KIN4/I / DSM 18386 / JCM 14125), this protein is Small ribosomal subunit protein uS19.